Here is a 150-residue protein sequence, read N- to C-terminus: Seminal ribonuclease (150 aa).

Residues 1–26 (MALKSLVVLPLLVLVLLLVRVQPSLG) form the signal peptide. Residues lysine 33 and arginine 36 each coordinate substrate. Histidine 38 (proton acceptor) is an active-site residue. Cystine bridges form between cysteine 52/cysteine 110, cysteine 66/cysteine 121, cysteine 84/cysteine 136, and cysteine 91/cysteine 98. Residues 67–71 (KPVNT) and lysine 92 each bind substrate. Asparagine 93 bears the Deamidated asparagine; by deterioration mark. Arginine 111 contacts substrate. Histidine 145 serves as the catalytic Proton donor.

It belongs to the pancreatic ribonuclease family. Homodimer; disulfide-linked. In terms of tissue distribution, seminal plasma. Can reach 3% of the protein content of this fluid.

It is found in the secreted. It catalyses the reaction an [RNA] containing cytidine + H2O = an [RNA]-3'-cytidine-3'-phosphate + a 5'-hydroxy-ribonucleotide-3'-[RNA].. It carries out the reaction an [RNA] containing uridine + H2O = an [RNA]-3'-uridine-3'-phosphate + a 5'-hydroxy-ribonucleotide-3'-[RNA].. Allosteric regulation by both substrate and reaction products. In terms of biological role, this enzyme hydrolyzes both single- and double-stranded RNA. This is Seminal ribonuclease (SRN) from Bos taurus (Bovine).